The chain runs to 33 residues: Vejocalcin (33 aa).

3 disulfides stabilise this stretch: cysteine 3–cysteine 17, cysteine 10–cysteine 21, and cysteine 16–cysteine 32. The interval 23-24 (RR) is essential for stimulation of [3H]ryanodine binding to RYR1.

Expressed by the venom gland.

The protein localises to the secreted. In terms of biological role, this toxin stabilizes ryanodine receptor 1 (RyR1) opening in a long-lasting subconductance state (60% of the full conductance state). Furthermore, it triggers calcium release from sarcoplasmic vesicles (31 nM are enough to induce a sharp release, and 65% of the total calcium is released after toxin (100 nM) addition) probably by acting as a cell-penetrating peptide (CPP). In addition, it has been shown to dose-dependently stimulate ryanodine binding to RyR1 (EC(50)=3.7 nM). It also augments the bell-shaped calcium-[3H]ryanodine binding curve that is maximal at about 10 uM calcium concentration. It binds a different site as ryanodine. It acts synergistically with caffeine. In vivo, intracerebroventricular injection into mice induces neurotoxic symptoms, followed by death. This chain is Vejocalcin, found in Vaejovis mexicanus (Mexican scorpion).